The sequence spans 335 residues: uncharacterized protein (335 aa).

This is an uncharacterized protein from Schizosaccharomyces pombe (strain 972 / ATCC 24843) (Fission yeast).